Here is a 122-residue protein sequence, read N- to C-terminus: Large ribosomal subunit protein uL14 (122 aa).

The protein belongs to the universal ribosomal protein uL14 family. As to quaternary structure, part of the 50S ribosomal subunit. Forms a cluster with proteins L3 and L19. In the 70S ribosome, L14 and L19 interact and together make contacts with the 16S rRNA in bridges B5 and B8.

In terms of biological role, binds to 23S rRNA. Forms part of two intersubunit bridges in the 70S ribosome. In Xanthomonas axonopodis pv. citri (strain 306), this protein is Large ribosomal subunit protein uL14.